The primary structure comprises 163 residues: Lipoprotein signal peptidase (163 aa).

The next 4 helical transmembrane spans lie at 9-29 (AWPWLWFSVLVILLDQLSKYL), 42-62 (ILPFLNFTLNYNTGAAFSFLG), 67-87 (WQIIFFAAISFVVSIFLILWL), and 93-113 (SEIMMSLGLSLIIGGALGNFI). Active-site residues include Asp123 and Asp141. Residues 137–157 (FNVADSAICVGVFLLIVHMLL) form a helical membrane-spanning segment.

It belongs to the peptidase A8 family.

It localises to the cell inner membrane. The catalysed reaction is Release of signal peptides from bacterial membrane prolipoproteins. Hydrolyzes -Xaa-Yaa-Zaa-|-(S,diacylglyceryl)Cys-, in which Xaa is hydrophobic (preferably Leu), and Yaa (Ala or Ser) and Zaa (Gly or Ala) have small, neutral side chains.. It participates in protein modification; lipoprotein biosynthesis (signal peptide cleavage). Its function is as follows. This protein specifically catalyzes the removal of signal peptides from prolipoproteins. This chain is Lipoprotein signal peptidase, found in Coxiella burnetii (strain RSA 331 / Henzerling II).